The chain runs to 386 residues: MRIFKSHPLLRLVNSYVIDSPTPSNLSYLWNFGSLLALCLIIQIVTGVTLAMHYTPSVAEAFNSVEHIMRDVNNGWLIRYLHANTASAFFFLVYLHVGRGIYYGSYKAPRTLTWIIGSIILIVMMATAFLGYVLPYGQMSLWGATVITNLMSAIPWIGQDIVEFLWGGFSVNNATLNRFFALHFVLPFVLAALVIMHLISYHETVGSGNPLGISSNYDRLPFAPYYIFKDLITIFLFFFVLSLFVFFMPNALGDSENYVMANPMQTPPAIVPEWYLLPFYAILRSIPNKLLGVIAMFSAILIILVMPITDLSKYRGLQFRPLSKVAFYVFVANFLILMQLGAKHVESPFIEFGQISTVLYFSHFLVIMPLVSFIENTLVELITKKS.

4 consecutive transmembrane segments (helical) span residues 32 to 52 (FGSLLALCLIIQIVTGVTLAM), 76 to 98 (WLIRYLHANTASAFFFLVYLHVG), 113 to 133 (TWIIGSIILIVMMATAFLGYV), and 179 to 199 (FFALHFVLPFVLAALVIMHLI). The heme b site is built by histidine 82 and histidine 96. Positions 183 and 197 each coordinate heme b. A ubiquinone is bound at residue histidine 202. Helical transmembrane passes span 226 to 246 (YIFKDLITIFLFFFVLSLFVF), 290 to 310 (LLGVIAMFSAILIILVMPITD), 322 to 342 (LSKVAFYVFVANFLILMQLGA), and 349 to 369 (FIEFGQISTVLYFSHFLVIMP).

The protein belongs to the cytochrome b family. Fungal cytochrome b-c1 complex contains 10 subunits; 3 respiratory subunits, 2 core proteins and 5 low-molecular weight proteins. Cytochrome b-c1 complex is a homodimer. Requires heme b as cofactor.

It is found in the mitochondrion inner membrane. In terms of biological role, component of the ubiquinol-cytochrome c reductase complex (complex III or cytochrome b-c1 complex) that is part of the mitochondrial respiratory chain. The b-c1 complex mediates electron transfer from ubiquinol to cytochrome c. Contributes to the generation of a proton gradient across the mitochondrial membrane that is then used for ATP synthesis. The protein is Cytochrome b (cob) of Talaromyces marneffei (Penicillium marneffei).